A 445-amino-acid polypeptide reads, in one-letter code: MTIDAPELLEKLKISDADANGADIPGSTSAAANGMLKEDDDSDDDVAENTPAVAAENGTAKKKKNKKRKPKKKQPKVQTDPPSIPLSQLFPNNTYPKGEEVEYKDENRYRTTSEEKRHLDNLNSDFLSDYRQAAEAHRQVRQWAQRNIKPGQTLLEIANGIEDSARRLVGHDGLTEGDSLIAGMGFPTGLNIDNIVAHYSPNAGCKTVLAQNNVLKVDIGIHVGGRIVDSAFTMAFDPMYDNLLAAVKDATNTGVREAGIDVRVGELGGYIQEAMESYECEINGKTHPIKAIRNLCGHTILPYSIHGTKSVPFIKSNDMTKMEEGDVFAIETFGSTGSGRYVEGGEVSHYALRGDANRKDLTLSSARSLLTAIKKNFSTIPFCRRYLDRIGQEKYLLGLNYLVKSGIVEDYPPLNEKQGTYTAQFEHTILLRPTVKEVISRGDDY.

The tract at residues 14-115 (ISDADANGAD…ENRYRTTSEE (102 aa)) is disordered. The segment covering 38-47 (EDDDSDDDVA) has biased composition (acidic residues). Over residues 60–75 (AKKKKNKKRKPKKKQP) the composition is skewed to basic residues. Polar residues predominate over residues 85-95 (PLSQLFPNNTY). The segment covering 97 to 115 (KGEEVEYKDENRYRTTSEE) has biased composition (basic and acidic residues). H198 lines the substrate pocket. 3 residues coordinate a divalent metal cation: D218, D229, and H298. Residue H306 participates in substrate binding. A divalent metal cation is bound by residues E331 and E426.

This sequence belongs to the peptidase M24A family. Methionine aminopeptidase eukaryotic type 2 subfamily. Co(2+) serves as cofactor. The cofactor is Zn(2+). Requires Mn(2+) as cofactor. It depends on Fe(2+) as a cofactor.

Its subcellular location is the cytoplasm. The catalysed reaction is Release of N-terminal amino acids, preferentially methionine, from peptides and arylamides.. Cotranslationally removes the N-terminal methionine from nascent proteins. The N-terminal methionine is often cleaved when the second residue in the primary sequence is small and uncharged (Met-Ala-, Cys, Gly, Pro, Ser, Thr, or Val). In Neosartorya fischeri (strain ATCC 1020 / DSM 3700 / CBS 544.65 / FGSC A1164 / JCM 1740 / NRRL 181 / WB 181) (Aspergillus fischerianus), this protein is Methionine aminopeptidase 2-3.